A 269-amino-acid chain; its full sequence is MRNDVHLGHKARKRFGQNFLNDPYIIDGIVSAINPKPGQNLVEIGPGLGAITEPVGREVDKFTVIELDRDLAERLRNHPDLADKLTIHEGDAMRFDFTQLVKPNNKLRIFGNLPYNISTPLMFHLFEFHKDIQDMHFMLQKEVVNRLAAGPGSKAYGRLTVMAQYYCKVVPVLEVPPTAFVPPPKVDSAVVRLVPYEELPCPAKDLRLLDRVCREGFNQRRKTVRNCYKSLLSAEVLEELGVNPSMRPENLTLQQFVAMANWLADNPQH.

6 residues coordinate S-adenosyl-L-methionine: Asn18, Leu20, Gly45, Glu66, Asp91, and Asn112.

This sequence belongs to the class I-like SAM-binding methyltransferase superfamily. rRNA adenine N(6)-methyltransferase family. RsmA subfamily.

It is found in the cytoplasm. It catalyses the reaction adenosine(1518)/adenosine(1519) in 16S rRNA + 4 S-adenosyl-L-methionine = N(6)-dimethyladenosine(1518)/N(6)-dimethyladenosine(1519) in 16S rRNA + 4 S-adenosyl-L-homocysteine + 4 H(+). Functionally, specifically dimethylates two adjacent adenosines (A1518 and A1519) in the loop of a conserved hairpin near the 3'-end of 16S rRNA in the 30S particle. May play a critical role in biogenesis of 30S subunits. This Vibrio parahaemolyticus serotype O3:K6 (strain RIMD 2210633) protein is Ribosomal RNA small subunit methyltransferase A.